Reading from the N-terminus, the 22-residue chain is 65 kDa membrane protein (22 aa).

The disordered stretch occupies residues A1 to P22.

The protein localises to the cell membrane. Functionally, binds various plasma and ECM-proteins. This Staphylococcus aureus protein is 65 kDa membrane protein.